Here is a 428-residue protein sequence, read N- to C-terminus: MEILMASSNLIKQLQERGLVAQVTDEDALAERLAQGPIALYCGFDPTADSLHLGHLVPLLCLKRFQQAGHKPVALVGGATGLIGDPSFKAAERKLNTEETVQEWVAKIRKQVAPFLDFDCGENSAIAANNYDWFGSMNVLTFLRDIGKHFSVNQMINKEAVKQRLNRDDQGISFTEFSYNLLQGYDFACLNKLHGVALQIGGSDQWGNITSGIDLTRRLHQNQVFGLTVPLITKADGTKFGKTEGGAVWLDPKKTSPYKFYQFWINTADADVYRFLKFFTFMDIEEINALEEEDKNSGKAPRAQYVLAEQVTRLVHGEEGLIAAKRITESLFNGSLGELSEADFEQLAQDGVPMIELEKGTDLMQALVDAELQPSRGQARKTIASNAVTINGEKQSDPEYIFNDEDRLFGRYTLLRRGKKNYCLICWK.

Tyr41 contributes to the L-tyrosine binding site. A 'HIGH' region motif is present at residues Pro46–His55. Residues Tyr179 and Gln183 each contribute to the L-tyrosine site. The short motif at Lys239–Thr243 is the 'KMSKS' region element. Lys242 provides a ligand contact to ATP. Residues Thr361–Gly418 enclose the S4 RNA-binding domain.

It belongs to the class-I aminoacyl-tRNA synthetase family. TyrS type 1 subfamily. Homodimer.

The protein resides in the cytoplasm. It catalyses the reaction tRNA(Tyr) + L-tyrosine + ATP = L-tyrosyl-tRNA(Tyr) + AMP + diphosphate + H(+). Catalyzes the attachment of tyrosine to tRNA(Tyr) in a two-step reaction: tyrosine is first activated by ATP to form Tyr-AMP and then transferred to the acceptor end of tRNA(Tyr). The sequence is that of Tyrosine--tRNA ligase from Salmonella arizonae (strain ATCC BAA-731 / CDC346-86 / RSK2980).